The chain runs to 1729 residues: Cullin-7 (1729 aa).

Positions 350 to 388 (DRPRSSARSPGSIFQPQLADVSPGLPATQAQPSFRRSRH) are disordered. Position 371 is a phosphoserine (S371). The region spanning 392–465 (RSEFASGNTY…HWHMLEILGF (74 aa)) is the CPH domain. Positions 632–642 (SEDAAKVEAKE) are enriched in basic and acidic residues. The disordered stretch occupies residues 632 to 654 (SEDAAKVEAKEPPSQSPNTPLQR). The DOC domain maps to 845–1024 (PINIPFFDVF…HTRLFYMVRA (180 aa)). The segment at 1373–1405 (VGHGASGKEHKSEKEEEAGAAAAVDVAEGEEEE) is disordered. K1607 is covalently cross-linked (Glycyl lysine isopeptide (Lys-Gly) (interchain with G-Cter in NEDD8)).

This sequence belongs to the cullin family. Component of the 3M complex, composed of core components CUL7, CCDC8 and OBSL1. Component of the Cul7-RING(FBXW8) complex consisting of CUL7, RBX1, SKP1 and FBXW8. Within the Cul7-RING(FBXW8) complex interacts with FBXW8 and RBX1, but not with SKP1. Interacts with CUL1 (via the C-terminal domain); the interaction seems to be mediated by FBXW8; it is likely specific to FBXW8, but not other F-box proteins. Interacts (via the CPH domain) with p53/TP53; the interaction preferentially involves tetrameric and dimeric p53/TP53; this interaction recruits p53/TP53 for ubiquitination by neddylated CUL1-RBX1. The CUL7-CUL9 heterodimer seems to interact specifically with p53/TP53. Interacts with FBXW8; interaction is mutually exclusive of binding to CUL9 or p53/TP53. Interacts with CUL9; leading to inhibited CUL9 activity. Interacts with OBSL1. Interacts (as part of the 3M complex) with HDAC4 and HDAC5; it is negatively regulated by ANKRA2.

Its subcellular location is the cytoplasm. The protein localises to the cytoskeleton. It is found in the microtubule organizing center. The protein resides in the centrosome. It localises to the perinuclear region. Its subcellular location is the golgi apparatus. The protein operates within protein modification; protein ubiquitination. Core component of the 3M and Cul7-RING(FBXW8) complexes, which mediate the ubiquitination and subsequent proteasomal degradation of target proteins. Core component of the 3M complex, a complex required to regulate microtubule dynamics and genome integrity. It is unclear how the 3M complex regulates microtubules, it could act by controlling the level of a microtubule stabilizer. The Cul7-RING(FBXW8) complex alone lacks ubiquitination activity and does not promote polyubiquitination and proteasomal degradation of p53/TP53. However it mediates recruitment of p53/TP53 for ubiquitination by neddylated CUL1-RBX1. Interaction with CUL9 is required to inhibit CUL9 activity and ubiquitination of BIRC5. The Cul7-RING(FBXW8) complex also mediates ubiquitination and consequent degradation of target proteins such as GORASP1, IRS1 and MAP4K1/HPK1. Ubiquitination of GORASP1 regulates Golgi morphogenesis and dendrite patterning in brain. Mediates ubiquitination and degradation of IRS1 in a mTOR-dependent manner: the Cul7-RING(FBXW8) complex recognizes and binds IRS1 previously phosphorylated by S6 kinase (RPS6KB1 or RPS6KB2). The Cul7-RING(FBXW8) complex also mediates ubiquitination of MAP4K1/HPK1: recognizes and binds autophosphorylated MAP4K1/HPK1, leading to its degradation, thereby affecting cell proliferation and differentiation. Acts as a regulator in trophoblast cell epithelial-mesenchymal transition and placental development. While the Cul7-RING(FBXW8) and the 3M complexes are associated and involved in common processes, CUL7 and the Cul7-RING(FBXW8) complex may have additional functions. Probably plays a role in the degradation of proteins involved in endothelial proliferation and/or differentiation. This Pongo abelii (Sumatran orangutan) protein is Cullin-7 (CUL7).